The sequence spans 277 residues: 3-methyl-2-oxobutanoate hydroxymethyltransferase (277 aa).

Mg(2+)-binding residues include Asp49 and Asp88. 3-methyl-2-oxobutanoate is bound by residues 49-50 (DS), Asp88, and Lys118. Glu120 contributes to the Mg(2+) binding site. The active-site Proton acceptor is Glu186.

This sequence belongs to the PanB family. In terms of assembly, homodecamer; pentamer of dimers. Mg(2+) serves as cofactor.

Its subcellular location is the cytoplasm. It carries out the reaction 3-methyl-2-oxobutanoate + (6R)-5,10-methylene-5,6,7,8-tetrahydrofolate + H2O = 2-dehydropantoate + (6S)-5,6,7,8-tetrahydrofolate. The protein operates within cofactor biosynthesis; (R)-pantothenate biosynthesis; (R)-pantoate from 3-methyl-2-oxobutanoate: step 1/2. In terms of biological role, catalyzes the reversible reaction in which hydroxymethyl group from 5,10-methylenetetrahydrofolate is transferred onto alpha-ketoisovalerate to form ketopantoate. In Cereibacter sphaeroides (strain ATCC 17029 / ATH 2.4.9) (Rhodobacter sphaeroides), this protein is 3-methyl-2-oxobutanoate hydroxymethyltransferase.